The sequence spans 342 residues: Lipopolysaccharide heptosyltransferase 1 (342 aa).

8 residues coordinate ADP-L-glycero-beta-D-manno-heptose: serine 188, serine 189, lysine 193, glutamate 225, aspartate 268, serine 269, glycine 270, and histidine 273.

This sequence belongs to the glycosyltransferase 9 family.

Its subcellular location is the cell inner membrane. The enzyme catalyses an alpha-Kdo-(2-&gt;4)-alpha-Kdo-(2-&gt;6)-lipid A + ADP-L-glycero-beta-D-manno-heptose = an L-alpha-D-Hep-(1-&gt;5)-[alpha-Kdo-(2-&gt;4)]-alpha-Kdo-(2-&gt;6)-lipid A + ADP + H(+). It functions in the pathway bacterial outer membrane biogenesis; LPS core biosynthesis. In terms of biological role, glycosyltransferase involved in the biosynthesis of the core oligosaccharide region of lipopolysaccharide (LPS). Catalyzes the addition of the first heptose unit to one 3-deoxy-D-manno-octulosonic acid (Kdo) residue of the Kdo2-lipid A module. In Campylobacter coli, this protein is Lipopolysaccharide heptosyltransferase 1.